The following is a 220-amino-acid chain: MAAAAQTGKKKTVRPGEWKIWLLYAVGFVPAVWTFYLGASGNLGADPVKTFEHTLGLWALRFLILTLMVTPIRDLTGMAFLRYRRALGLLAFYYALMHFATYMVLDQGLNISAIVTDIVRRPFITIGMISLVLLVPLALTSNNWSIRKLGRRWNSLHKLVYVAIAGGAIHFIMSVKSWPAEPVIYAGIVSALLLWRLVRPHARNRKPVSRPRGEAMAVKK.

Helical transmembrane passes span 20–40 (IWLL…LGAS), 52–72 (EHTL…VTPI), 86–106 (ALGL…MVLD), 122–142 (PFIT…LTSN), and 159–179 (LVYV…KSWP).

This sequence belongs to the MsrQ family. Heterodimer of a catalytic subunit (MsrP) and a heme-binding subunit (MsrQ). FMN is required as a cofactor. Heme b serves as cofactor.

Its subcellular location is the cell inner membrane. Its function is as follows. Part of the MsrPQ system that repairs oxidized periplasmic proteins containing methionine sulfoxide residues (Met-O), using respiratory chain electrons. Thus protects these proteins from oxidative-stress damage caused by reactive species of oxygen and chlorine generated by the host defense mechanisms. MsrPQ is essential for the maintenance of envelope integrity under bleach stress, rescuing a wide series of structurally unrelated periplasmic proteins from methionine oxidation. MsrQ provides electrons for reduction to the reductase catalytic subunit MsrP, using the quinone pool of the respiratory chain. This Brucella anthropi (strain ATCC 49188 / DSM 6882 / CCUG 24695 / JCM 21032 / LMG 3331 / NBRC 15819 / NCTC 12168 / Alc 37) (Ochrobactrum anthropi) protein is Protein-methionine-sulfoxide reductase heme-binding subunit MsrQ.